Here is a 455-residue protein sequence, read N- to C-terminus: Protein chibby homolog 2 (455 aa).

Ser-41, Ser-86, Ser-89, Ser-97, Ser-124, Ser-144, Ser-148, and Ser-150 each carry phosphoserine. The stretch at 160 to 197 forms a coiled coil; the sequence is KRLAKECLLQENKTLREENRALREENRMLRKENKILQV. A phosphoserine mark is found at Ser-211 and Ser-225. Positions 240-266 form a coiled coil; it reads GRENSTLQLLREENRALQQLLEQRKAY. Residues 267-318 are disordered; it reads WAQPDEKAASTEEIKPISSPHEEPHGLLPDPGPGLPSPFEEPKGLPAPPDDS. Positions 270 to 291 are enriched in basic and acidic residues; it reads PDEKAASTEEIKPISSPHEEPH. Ser-276 and Ser-332 each carry phosphoserine. The stretch at 350-421 forms a coiled coil; the sequence is SQSLELLREM…KLKLQQKLVI (72 aa).

The protein belongs to the chibby family. SPERT subfamily. As to quaternary structure, homodimer. Binds to NEK1.

This Bos taurus (Bovine) protein is Protein chibby homolog 2 (CBY2).